The sequence spans 429 residues: Probable E3 ubiquitin-protein ligase makorin-1 (429 aa).

3 consecutive C3H1-type zinc fingers follow at residues 18 to 45, 48 to 75, and 153 to 180; these read WTKH…HDLT, KPAA…HCKP, and ELRK…HGDV. A makorin-type Cys-His region spans residues 181 to 208; that stretch reads CDMCGLQVLHPTDSSQRSEHTKACIEAH. The RING-type zinc-finger motif lies at 226–280; it reads CGVCMEVVFEKANPSERRFGILSNCSHCYCLKCIRKWRSAKQFESKIIKSCPECR. The C3H1-type 4 zinc finger occupies 309–338; the sequence is GMGRKPCRYFDEGRGICPFGANCFYKHAFP. The disordered stretch occupies residues 343–362; sequence EEAQPQRRQTGSSSRNRNSR. A compositionally biased stretch (low complexity) spans 348–358; that stretch reads QRRQTGSSSRN.

It catalyses the reaction S-ubiquitinyl-[E2 ubiquitin-conjugating enzyme]-L-cysteine + [acceptor protein]-L-lysine = [E2 ubiquitin-conjugating enzyme]-L-cysteine + N(6)-ubiquitinyl-[acceptor protein]-L-lysine.. It participates in protein modification; protein ubiquitination. Its function is as follows. E3 ubiquitin ligase catalyzing the covalent attachment of ubiquitin moieties onto substrate proteins. The protein is Probable E3 ubiquitin-protein ligase makorin-1 of Takifugu rubripes (Japanese pufferfish).